We begin with the raw amino-acid sequence, 209 residues long: MSVDEVTKKFEETVSVDGPKTVLSDAKDFEVKHPLNTKWTLWYTKPAVDKSESWSDLLRPVTSFQSVEEFWAIVQNIPEPHELPLKSDYHVFRNDIRPEWEDSANAKGGKWSFQVRGRGAEIDELWLRTLLAVIGETIDEEDSQINGVVLNVRKGGNRFALWTKSCDKEPLSNIGARFKQVLKLADEDTLEFFPHSTANDRHSQPTITL.

This sequence belongs to the eukaryotic initiation factor 4E family. In terms of assembly, eIF4F is a multi-subunit complex, the composition of which varies with external and internal environmental conditions. It is composed of at least eIF4A, eIF4E and eIF4G. eIF4E is also known to interact with other partners.

Functionally, recognizes and binds the 7-methylguanosine-containing mRNA cap during an early step in the initiation of protein synthesis and facilitates ribosome binding by inducing the unwinding of the mRNAs secondary structures. This is Eukaryotic translation initiation factor 4E (TIF45) from Candida glabrata (strain ATCC 2001 / BCRC 20586 / JCM 3761 / NBRC 0622 / NRRL Y-65 / CBS 138) (Yeast).